Reading from the N-terminus, the 150-residue chain is FAD synthase (150 aa).

Residues 16 to 17 (VF), 21 to 24 (HVGH), and D102 contribute to the ATP site.

The protein belongs to the archaeal FAD synthase family. Homodimer. It depends on a divalent metal cation as a cofactor.

The enzyme catalyses FMN + ATP + H(+) = FAD + diphosphate. Its pathway is cofactor biosynthesis; FAD biosynthesis; FAD from FMN: step 1/1. Its function is as follows. Catalyzes the transfer of the AMP portion of ATP to flavin mononucleotide (FMN) to produce flavin adenine dinucleotide (FAD) coenzyme. The polypeptide is FAD synthase (Thermococcus onnurineus (strain NA1)).